The primary structure comprises 21 residues: Pedibin (21 aa).

The tract at residues 1–21 (AGEDVSHELEEKEKALANHSE) is disordered.

Its function is as follows. Morphogenetically active peptide. Active in foot development. The polypeptide is Pedibin (Hydra vulgaris (Hydra)).